Consider the following 197-residue polypeptide: MKCYKSSSILSTNHHPFFYKQQPISSLQPTSIPTTISYPTRTRFSSTRIQSRLTHDDPVKQSEDLSFYDLLGVTESVTLPEIKQAYKQLARKYHPDVSPPDRVEEYTDRFIRVQEAYETLSDPRRRVLYDRDLSMGFSFSFSGRRQNRYDQEVVEEKSEWKAKWQTQLSGLRRRSNQKDNNTMSWAARMRRQQQESS.

Residues 1 to 60 (MKCYKSSSILSTNHHPFFYKQQPISSLQPTSIPTTISYPTRTRFSSTRIQSRLTHDDPVK) constitute a chloroplast transit peptide. Positions 66-133 (SFYDLLGVTE…RRRVLYDRDL (68 aa)) constitute a J domain. Positions 169 to 197 (SGLRRRSNQKDNNTMSWAARMRRQQQESS) are disordered.

It belongs to the DnaJ family. C/III subfamily. Light-grown seedlings.

It is found in the plastid. The protein localises to the chloroplast. Functionally, plays a continuous role in plant development probably in the structural organization of compartments. The protein is Chaperone protein dnaJ 20, chloroplastic (ATJ20) of Arabidopsis thaliana (Mouse-ear cress).